Reading from the N-terminus, the 317-residue chain is Glycerol-3-phosphate dehydrogenase [NAD(P)+] (317 aa).

NADPH contacts are provided by W20, R40, R41, and K88. Positions 88 and 116 each coordinate sn-glycerol 3-phosphate. S120 is an NADPH binding site. Sn-glycerol 3-phosphate is bound by residues K171, D224, S234, R235, and N236. Catalysis depends on K171, which acts as the Proton acceptor. NADPH is bound at residue R235. Residue E261 participates in NADPH binding.

This sequence belongs to the NAD-dependent glycerol-3-phosphate dehydrogenase family.

It is found in the cytoplasm. It catalyses the reaction sn-glycerol 3-phosphate + NAD(+) = dihydroxyacetone phosphate + NADH + H(+). The catalysed reaction is sn-glycerol 3-phosphate + NADP(+) = dihydroxyacetone phosphate + NADPH + H(+). The protein operates within membrane lipid metabolism; glycerophospholipid metabolism. Functionally, catalyzes the reduction of the glycolytic intermediate dihydroxyacetone phosphate (DHAP) to sn-glycerol 3-phosphate (G3P), the key precursor for phospholipid synthesis. The chain is Glycerol-3-phosphate dehydrogenase [NAD(P)+] from Synechocystis sp. (strain ATCC 27184 / PCC 6803 / Kazusa).